We begin with the raw amino-acid sequence, 267 residues long: Dihydropteroate synthase (267 aa).

A Pterin-binding domain is found at 1–251 (MTKTKIIGIL…NVDLNVKLAQ (251 aa)). Mg(2+) is bound at residue Asn-11. (7,8-dihydropterin-6-yl)methyl diphosphate is bound by residues Thr-51, Asp-84, Asn-103, Asp-167, Lys-203, and 239-241 (RVH).

Belongs to the DHPS family. It depends on Mg(2+) as a cofactor.

It carries out the reaction (7,8-dihydropterin-6-yl)methyl diphosphate + 4-aminobenzoate = 7,8-dihydropteroate + diphosphate. It participates in cofactor biosynthesis; tetrahydrofolate biosynthesis; 7,8-dihydrofolate from 2-amino-4-hydroxy-6-hydroxymethyl-7,8-dihydropteridine diphosphate and 4-aminobenzoate: step 1/2. Catalyzes the condensation of para-aminobenzoate (pABA) with 6-hydroxymethyl-7,8-dihydropterin diphosphate (DHPt-PP) to form 7,8-dihydropteroate (H2Pte), the immediate precursor of folate derivatives. This chain is Dihydropteroate synthase (folP), found in Staphylococcus haemolyticus.